A 238-amino-acid polypeptide reads, in one-letter code: Protein Iojap, chloroplastic (238 aa).

The N-terminal 66 residues, 1 to 66, are a transit peptide targeting the chloroplast; that stretch reads MASSTGLTVA…KILTSLSNSR (66 aa).

Belongs to the Iojap/RsfS family. In terms of assembly, interacts with chloroplast ribosomal protein uL14c (rpl14).

The protein localises to the plastid. It localises to the chloroplast. In terms of biological role, may be a ribosome silencing factor (Potential). Involved in plastid biogenesis. This chain is Protein Iojap, chloroplastic (IJ), found in Arabidopsis thaliana (Mouse-ear cress).